A 245-amino-acid chain; its full sequence is 1-(5-phosphoribosyl)-5-[(5-phosphoribosylamino)methylideneamino] imidazole-4-carboxamide isomerase (245 aa).

The active-site Proton acceptor is Asp7. Asp129 functions as the Proton donor in the catalytic mechanism.

It belongs to the HisA/HisF family.

The protein resides in the cytoplasm. It carries out the reaction 1-(5-phospho-beta-D-ribosyl)-5-[(5-phospho-beta-D-ribosylamino)methylideneamino]imidazole-4-carboxamide = 5-[(5-phospho-1-deoxy-D-ribulos-1-ylimino)methylamino]-1-(5-phospho-beta-D-ribosyl)imidazole-4-carboxamide. It functions in the pathway amino-acid biosynthesis; L-histidine biosynthesis; L-histidine from 5-phospho-alpha-D-ribose 1-diphosphate: step 4/9. The protein is 1-(5-phosphoribosyl)-5-[(5-phosphoribosylamino)methylideneamino] imidazole-4-carboxamide isomerase of Proteus mirabilis (strain HI4320).